We begin with the raw amino-acid sequence, 202 residues long: Dephospho-CoA kinase (202 aa).

The DPCK domain maps to 6-202 (KVSITGDLSS…EYFYALKGAL (197 aa)). 14-19 (SSGKTE) is a binding site for ATP.

This sequence belongs to the CoaE family.

It localises to the cytoplasm. It catalyses the reaction 3'-dephospho-CoA + ATP = ADP + CoA + H(+). It functions in the pathway cofactor biosynthesis; coenzyme A biosynthesis; CoA from (R)-pantothenate: step 5/5. In terms of biological role, catalyzes the phosphorylation of the 3'-hydroxyl group of dephosphocoenzyme A to form coenzyme A. In Chlamydia felis (strain Fe/C-56) (Chlamydophila felis), this protein is Dephospho-CoA kinase.